The following is a 157-amino-acid chain: UPF0262 protein Atu0536 (157 aa).

Belongs to the UPF0262 family.

This chain is UPF0262 protein Atu0536, found in Agrobacterium fabrum (strain C58 / ATCC 33970) (Agrobacterium tumefaciens (strain C58)).